The following is a 239-amino-acid chain: Large ribosomal subunit protein uL1 (239 aa).

Belongs to the universal ribosomal protein uL1 family. Part of the 50S ribosomal subunit.

Its function is as follows. Binds directly to 23S rRNA. The L1 stalk is quite mobile in the ribosome, and is involved in E site tRNA release. Protein L1 is also a translational repressor protein, it controls the translation of the L11 operon by binding to its mRNA. The sequence is that of Large ribosomal subunit protein uL1 from Rickettsia akari (strain Hartford).